Consider the following 344-residue polypeptide: L-rhamnose-proton symporter (344 aa).

The next 10 helical transmembrane spans lie at 4–24, 38–58, 68–88, 101–121, 137–157, 175–195, 214–234, 255–275, 290–310, and 324–344; these read PILLGIFWHFIGAASAACFYA, WSLGGFFSWIILPWSISWWLL, FDMATLLPIFLFGAMWGIGNI, MGIGIAIGVTLIIGTLMTPVL, TLLGVLVAVIGVAIVSYAGLL, LILAVMCGIFSAGMSFAMDAA, LPSYVVIMGGGAIVNLGFCFI, LIANALFAILGGVMWYLQFFF, ISWMLHMSFYVLCGGIVGLLF, and LVLGCVVIILAANIVGLGMAV.

Belongs to the L-rhamnose transporter (TC 2.A.7.6) family.

Its subcellular location is the cell inner membrane. The enzyme catalyses L-rhamnopyranose(in) + H(+)(in) = L-rhamnopyranose(out) + H(+)(out). Functionally, uptake of L-rhamnose across the cytoplasmic membrane with the concomitant transport of protons into the cell (symport system). The protein is L-rhamnose-proton symporter of Pectobacterium atrosepticum (strain SCRI 1043 / ATCC BAA-672) (Erwinia carotovora subsp. atroseptica).